A 72-amino-acid polypeptide reads, in one-letter code: MFTMKKSLLLLFFLGTVSLSLCEQERGADEDDGGEMTEELKRGVITDALKGAAKTVAAELLRKAHCKLTNSC.

The first 22 residues, 1–22 (MFTMKKSLLLLFFLGTVSLSLC), serve as a signal peptide directing secretion. A propeptide spanning residues 23 to 42 (EQERGADEDDGGEMTEELKR) is cleaved from the precursor. The cysteines at positions 66 and 72 are disulfide-linked.

Expressed by the skin glands.

The protein resides in the secreted. In terms of biological role, antimicrobial peptide. Active against the Gram-positive bacteria S.aureus FDA209P (MIC=16.5 ug/ml) and B.subtilis ATCC 6633 (MIC&gt;64 ug/ml), and the Gram-negative bacteria E.coli O111 (MIC=8.2 ug/ml) and E.coli ATCC 25922 (MIC=8.2 ug/ml). Not active against the fungus C.albicans. The polypeptide is Brevinin-2GHb (Sylvirana guentheri (Gunther's frog)).